The chain runs to 609 residues: Aspartate--tRNA(Asp/Asn) ligase (609 aa).

An L-aspartate-binding site is contributed by Glu177. The aspartate stretch occupies residues Gln201–Lys204. Arg223 contacts L-aspartate. Residues Arg223–Glu225 and Gln232 contribute to the ATP site. L-aspartate is bound at residue His461. Glu499 contributes to the ATP binding site. Arg506 is an L-aspartate binding site. Gly551 to Arg554 serves as a coordination point for ATP.

This sequence belongs to the class-II aminoacyl-tRNA synthetase family. Type 1 subfamily. Homodimer.

It localises to the cytoplasm. It catalyses the reaction tRNA(Asx) + L-aspartate + ATP = L-aspartyl-tRNA(Asx) + AMP + diphosphate. Aspartyl-tRNA synthetase with relaxed tRNA specificity since it is able to aspartylate not only its cognate tRNA(Asp) but also tRNA(Asn). Reaction proceeds in two steps: L-aspartate is first activated by ATP to form Asp-AMP and then transferred to the acceptor end of tRNA(Asp/Asn). In Synechococcus sp. (strain CC9605), this protein is Aspartate--tRNA(Asp/Asn) ligase.